The following is a 738-amino-acid chain: Ethylene receptor (738 aa).

Transmembrane regions (helical) follow at residues 22–42, 53–73, and 91–111; these read ISDFFIAVAYFSIPIELVYFV, VLVQFGAFIVLCGATHLINLW, and VLTAVVSCATALMLVHIIPDL. The Cu cation site is built by Cys64 and His68. The region spanning 157 to 305 is the GAF domain; that stretch reads DRHTILKTTL…VVADQVAVAL (149 aa). The region spanning 348 to 585 is the Histidine kinase domain; the sequence is VMNHEMRTPM…TAIFIVKLGI (238 aa). His351 carries the phosphohistidine; by autocatalysis modification. The Response regulatory domain occupies 613–730; sequence KVLIMDDNGF…KMRSVLSELL (118 aa). A 4-aspartylphosphate modification is found at Asp661.

This sequence belongs to the ethylene receptor family. As to quaternary structure, homodimer; disulfide-linked. Cu cation is required as a cofactor. Post-translationally, activation probably requires a transfer of a phosphate group between a His in the transmitter domain and an Asp of the receiver domain.

It localises to the endoplasmic reticulum membrane. It carries out the reaction ATP + protein L-histidine = ADP + protein N-phospho-L-histidine.. In terms of biological role, may act early in the ethylene signal transduction pathway, possibly as an ethylene receptor, or as a regulator of the pathway. This Nicotiana tabacum (Common tobacco) protein is Ethylene receptor (ETR1).